Here is a 301-residue protein sequence, read N- to C-terminus: Sulfate adenylyltransferase subunit 2 (301 aa).

The protein belongs to the PAPS reductase family. CysD subfamily. Heterodimer composed of CysD, the smaller subunit, and CysN.

It carries out the reaction sulfate + ATP + H(+) = adenosine 5'-phosphosulfate + diphosphate. It functions in the pathway sulfur metabolism; hydrogen sulfide biosynthesis; sulfite from sulfate: step 1/3. Functionally, with CysN forms the ATP sulfurylase (ATPS) that catalyzes the adenylation of sulfate producing adenosine 5'-phosphosulfate (APS) and diphosphate, the first enzymatic step in sulfur assimilation pathway. APS synthesis involves the formation of a high-energy phosphoric-sulfuric acid anhydride bond driven by GTP hydrolysis by CysN coupled to ATP hydrolysis by CysD. The protein is Sulfate adenylyltransferase subunit 2 of Shewanella woodyi (strain ATCC 51908 / MS32).